A 258-amino-acid chain; its full sequence is Myelin proteolipid protein (258 aa).

Topologically, residues 1 to 22 (MFPVRHALLCKALGCYDCCIRC) are cytoplasmic. Residues C18, C19, and C22 are each lipidated (S-palmitoyl cysteine). A helical transmembrane segment spans residues 23–48 (LGAVPYPSLVSTLLCFTGMALFCGCG). Topologically, residues 49-82 (HEALAHTEVLVETYFVRNIQDYVILASFIKYFQY) are extracellular. A helical membrane pass occupies residues 83 to 103 (VIYGLASFFFLYCILLLAEGF). Residues 104-128 (YTTSAVKQTFGEFRSTRCGRCLSLT) are Cytoplasmic-facing. Residues C121 and C124 are each lipidated (S-palmitoyl cysteine). Residues 129 to 149 (FIIVTYVLAVIWLAVFAFTAI) form a helical membrane-spanning segment. At 150–218 (PSSSSLIWHR…KTKEFFVTYD (69 aa)) the chain is on the extracellular side. Residues C181 and C200 are joined by a disulfide bond. Residues 219 to 239 (LYIAAFAGAGIALLALFLYVV) traverse the membrane as a helical segment. Over 240 to 258 (ATTYNYAVLRFLGRKGLRC) the chain is Cytoplasmic.

Belongs to the myelin proteolipid protein family. In terms of tissue distribution, central nervous system. Highest levels in spinal cord and medulla oblongata.

It is found in the cell membrane. This is the major myelin protein from the central nervous system. It plays an important role in the formation or maintenance of the multilamellar structure of myelin. May be involved in neuron and glial cell differentiation. The sequence is that of Myelin proteolipid protein (plp) from Oncorhynchus mykiss (Rainbow trout).